The sequence spans 142 residues: Large ribosomal subunit protein uL11 (142 aa).

Belongs to the universal ribosomal protein uL11 family. In terms of assembly, part of the ribosomal stalk of the 50S ribosomal subunit. Interacts with L10 and the large rRNA to form the base of the stalk. L10 forms an elongated spine to which L12 dimers bind in a sequential fashion forming a multimeric L10(L12)X complex. One or more lysine residues are methylated.

Forms part of the ribosomal stalk which helps the ribosome interact with GTP-bound translation factors. The chain is Large ribosomal subunit protein uL11 from Actinobacillus succinogenes (strain ATCC 55618 / DSM 22257 / CCUG 43843 / 130Z).